The chain runs to 161 residues: MGDIMTLKLLKEENGLSPMLREFRTLVRDSNIEKVAFVGSVGVCQPFAELFGYAIRDKECYFIPDGDLNKVKKLVIKDIGMQMEDFENLNKVDAIVLFGGLAMPKYGVEVDKIKELINKLSPKKVIGVCFMSIFQKAGWDKEIDFDYLMDGFIKVSIYCKD.

It to M.thermoautotrophicum MTH862.

This is an uncharacterized protein from Methanocaldococcus jannaschii (strain ATCC 43067 / DSM 2661 / JAL-1 / JCM 10045 / NBRC 100440) (Methanococcus jannaschii).